The following is a 295-amino-acid chain: Energy-coupling factor transporter ATP-binding protein EcfA2 (295 aa).

Positions 3-246 (ITFKQVDFTY…PAWLTAHQLG (244 aa)) constitute an ABC transporter domain. 40–47 (GHTGSGKS) serves as a coordination point for ATP.

The protein belongs to the ABC transporter superfamily. Energy-coupling factor EcfA family. As to quaternary structure, forms a stable energy-coupling factor (ECF) transporter complex composed of 2 membrane-embedded substrate-binding proteins (S component), 2 ATP-binding proteins (A component) and 2 transmembrane proteins (T component).

The protein resides in the cell membrane. Functionally, ATP-binding (A) component of a common energy-coupling factor (ECF) ABC-transporter complex. Unlike classic ABC transporters this ECF transporter provides the energy necessary to transport a number of different substrates. This is Energy-coupling factor transporter ATP-binding protein EcfA2 from Lactiplantibacillus plantarum (strain ATCC BAA-793 / NCIMB 8826 / WCFS1) (Lactobacillus plantarum).